Here is a 78-residue protein sequence, read N- to C-terminus: Acyl carrier protein (78 aa).

Positions 2 to 77 constitute a Carrier domain; sequence SDIADRVKKI…DAIKFLEKNS (76 aa). S37 is modified (O-(pantetheine 4'-phosphoryl)serine).

It belongs to the acyl carrier protein (ACP) family. 4'-phosphopantetheine is transferred from CoA to a specific serine of apo-ACP by AcpS. This modification is essential for activity because fatty acids are bound in thioester linkage to the sulfhydryl of the prosthetic group.

The protein resides in the cytoplasm. It participates in lipid metabolism; fatty acid biosynthesis. Its function is as follows. Carrier of the growing fatty acid chain in fatty acid biosynthesis. The sequence is that of Acyl carrier protein from Methylobacterium sp. (strain 4-46).